The chain runs to 244 residues: 3-deoxy-manno-octulosonate cytidylyltransferase (244 aa).

Belongs to the KdsB family.

Its subcellular location is the cytoplasm. The catalysed reaction is 3-deoxy-alpha-D-manno-oct-2-ulosonate + CTP = CMP-3-deoxy-beta-D-manno-octulosonate + diphosphate. Its pathway is nucleotide-sugar biosynthesis; CMP-3-deoxy-D-manno-octulosonate biosynthesis; CMP-3-deoxy-D-manno-octulosonate from 3-deoxy-D-manno-octulosonate and CTP: step 1/1. It functions in the pathway bacterial outer membrane biogenesis; lipopolysaccharide biosynthesis. Activates KDO (a required 8-carbon sugar) for incorporation into bacterial lipopolysaccharide in Gram-negative bacteria. The sequence is that of 3-deoxy-manno-octulosonate cytidylyltransferase from Vesicomyosocius okutanii subsp. Calyptogena okutanii (strain HA).